A 201-amino-acid chain; its full sequence is Small ribosomal subunit protein uS5 (201 aa).

The interval 1–28 (MAGPQRRGSGAGGGERRDRKGRDGGASA) is disordered. Positions 14 to 23 (GERRDRKGRD) are enriched in basic and acidic residues. In terms of domain architecture, S5 DRBM spans 34–97 (YVERVVAINR…EEAKKNFFKV (64 aa)).

It belongs to the universal ribosomal protein uS5 family. Part of the 30S ribosomal subunit. Contacts proteins S4 and S8.

Functionally, with S4 and S12 plays an important role in translational accuracy. In terms of biological role, located at the back of the 30S subunit body where it stabilizes the conformation of the head with respect to the body. In Streptomyces griseus subsp. griseus (strain JCM 4626 / CBS 651.72 / NBRC 13350 / KCC S-0626 / ISP 5235), this protein is Small ribosomal subunit protein uS5.